The chain runs to 134 residues: Small ribosomal subunit protein uS8c (134 aa).

Belongs to the universal ribosomal protein uS8 family. Part of the 30S ribosomal subunit.

The protein resides in the plastid. Functionally, one of the primary rRNA binding proteins, it binds directly to 16S rRNA central domain where it helps coordinate assembly of the platform of the 30S subunit. The polypeptide is Small ribosomal subunit protein uS8c (rps8) (Epifagus virginiana (Beechdrops)).